The sequence spans 360 residues: 3-dehydroquinate synthase (360 aa).

NAD(+) is bound by residues 72–77 (DGEEFK), 106–110 (GVVGD), 130–131 (TT), Lys-143, Lys-152, and 170–173 (TLTT). Residues Glu-185, His-248, and His-265 each contribute to the Zn(2+) site.

The protein belongs to the sugar phosphate cyclases superfamily. Dehydroquinate synthase family. Co(2+) is required as a cofactor. Zn(2+) serves as cofactor. The cofactor is NAD(+).

The protein resides in the cytoplasm. The enzyme catalyses 7-phospho-2-dehydro-3-deoxy-D-arabino-heptonate = 3-dehydroquinate + phosphate. Its pathway is metabolic intermediate biosynthesis; chorismate biosynthesis; chorismate from D-erythrose 4-phosphate and phosphoenolpyruvate: step 2/7. Functionally, catalyzes the conversion of 3-deoxy-D-arabino-heptulosonate 7-phosphate (DAHP) to dehydroquinate (DHQ). This Geobacter metallireducens (strain ATCC 53774 / DSM 7210 / GS-15) protein is 3-dehydroquinate synthase.